We begin with the raw amino-acid sequence, 166 residues long: PTS system glucose-specific EIIA component (166 aa).

The region spanning 34-138 is the PTS EIIA type-1 domain; sequence DPVFAQKMMG…SIISPIIITN (105 aa). Residues histidine 71 and histidine 86 each contribute to the Zn(2+) site. Histidine 86 serves as the catalytic Tele-phosphohistidine intermediate; for EIIA activity. Histidine 86 is subject to Phosphohistidine; by HPr.

As to quaternary structure, heterodimer with glycerol kinase (glpk). The cofactor is Zn(2+).

It localises to the cytoplasm. Functionally, the phosphoenolpyruvate-dependent sugar phosphotransferase system (sugar PTS), a major carbohydrate active transport system, catalyzes the phosphorylation of incoming sugar substrates concomitantly with their translocation across the cell membrane. The enzyme II complex composed of PtsG and Crr is involved in glucose transport. This chain is PTS system glucose-specific EIIA component (crr), found in Staphylococcus epidermidis (strain ATCC 35984 / DSM 28319 / BCRC 17069 / CCUG 31568 / BM 3577 / RP62A).